Consider the following 201-residue polypeptide: Recombination protein RecR (201 aa).

The C4-type zinc finger occupies 59 to 74 (CEICGNMDTENICRIC). Residues 82 to 177 (SIIAIVETVA…KISRLASGIP (96 aa)) enclose the Toprim domain.

Belongs to the RecR family.

Its function is as follows. May play a role in DNA repair. It seems to be involved in an RecBC-independent recombinational process of DNA repair. It may act with RecF and RecO. This chain is Recombination protein RecR, found in Rickettsia rickettsii (strain Iowa).